A 433-amino-acid polypeptide reads, in one-letter code: IPAAPVAAQARKLLRDLAFRPPLLAARSQVVQLTPRRWLNLQEYQSKKLMSDNGVKVQRFFVADTANEALEAAKRLNAKEIVLKAQILAGGRGKGVFSSGLKGGVHLTKDPEVVGQLAKQMIGYNLATKQTPKEGVKVNKVMVAEALDISRETYLAILMDRSCNGPVLVGSPQGGVDIEEVAASNPELIFKEQIDIIEGIKDSQAQRMAENLGFLGPLQNQAADQIKKLYNLFLKIDATQVEVNPFGETPEGQVVCFDAKINFDDNAEFRQKDIFAMDDKSENEPIENEAAKYDLKYIGLDGNIACFVNGAGLAMATCDIIFLNGGKPANFLDLGGGVKESQVYQAFKLLTADPKVEAILVNIFGGIVNCAIIANGITKACRELELKVPLVVRLEGTNVHEAQNILTNSGLPITSAVDLEDAAKKAVASVTKK.

A mitochondrion-targeting transit peptide spans 1–38 (IPAAPVAAQARKLLRDLAFRPPLLAARSQVVQLTPRRW). Residues 47 to 275 (KKLMSDNGVK…NAEFRQKDIF (229 aa)) enclose the ATP-grasp domain. Gln-58 provides a ligand contact to GTP. At Lys-74 the chain carries N6-acetyllysine. An N6-succinyllysine modification is found at Lys-79. Residue 91-93 (GRG) participates in GTP binding. Lys-133 and Lys-140 each carry N6-acetyllysine. Leu-147 contacts GTP. At Ser-162 the chain carries Phosphoserine. 2 positions are modified to N6-acetyllysine: Lys-201 and Lys-228. Residues Asn-244 and Asp-258 each coordinate Mg(2+). Lys-272 and Lys-292 each carry N6-acetyllysine. Residue Asn-309 coordinates substrate. Lys-339 is modified (N6-succinyllysine). Lys-348 carries the N6-acetyllysine modification. 366 to 368 (GIV) is a substrate binding site. N6-acetyllysine occurs at positions 387 and 424.

The protein belongs to the succinate/malate CoA ligase beta subunit family. GTP-specific subunit beta subfamily. As to quaternary structure, heterodimer of an alpha and a beta subunit. The beta subunit determines specificity for GTP. Requires Mg(2+) as cofactor.

Its subcellular location is the mitochondrion. It carries out the reaction GTP + succinate + CoA = succinyl-CoA + GDP + phosphate. The protein operates within carbohydrate metabolism; tricarboxylic acid cycle; succinate from succinyl-CoA (ligase route): step 1/1. GTP-specific succinyl-CoA synthetase functions in the citric acid cycle (TCA), coupling the hydrolysis of succinyl-CoA to the synthesis of GTP and thus represents the only step of substrate-level phosphorylation in the TCA. The beta subunit provides nucleotide specificity of the enzyme and binds the substrate succinate, while the binding sites for coenzyme A and phosphate are found in the alpha subunit. The protein is Succinate--CoA ligase [GDP-forming] subunit beta, mitochondrial of Sus scrofa (Pig).